Here is a 471-residue protein sequence, read N- to C-terminus: ATP synthase subunit beta (471 aa).

156–163 (GGAGVGKT) lines the ATP pocket.

It belongs to the ATPase alpha/beta chains family. F-type ATPases have 2 components, CF(1) - the catalytic core - and CF(0) - the membrane proton channel. CF(1) has five subunits: alpha(3), beta(3), gamma(1), delta(1), epsilon(1). CF(0) has three main subunits: a(1), b(2) and c(9-12). The alpha and beta chains form an alternating ring which encloses part of the gamma chain. CF(1) is attached to CF(0) by a central stalk formed by the gamma and epsilon chains, while a peripheral stalk is formed by the delta and b chains.

It localises to the cell membrane. It carries out the reaction ATP + H2O + 4 H(+)(in) = ADP + phosphate + 5 H(+)(out). Its function is as follows. Produces ATP from ADP in the presence of a proton gradient across the membrane. The catalytic sites are hosted primarily by the beta subunits. The sequence is that of ATP synthase subunit beta from Staphylococcus carnosus (strain TM300).